We begin with the raw amino-acid sequence, 444 residues long: Phosphoglucosamine mutase (444 aa).

Serine 100 (phosphoserine intermediate) is an active-site residue. Residues serine 100, aspartate 240, aspartate 242, and aspartate 244 each contribute to the Mg(2+) site. Serine 100 carries the phosphoserine modification.

Belongs to the phosphohexose mutase family. The cofactor is Mg(2+). Activated by phosphorylation.

The enzyme catalyses alpha-D-glucosamine 1-phosphate = D-glucosamine 6-phosphate. Catalyzes the conversion of glucosamine-6-phosphate to glucosamine-1-phosphate. This is Phosphoglucosamine mutase from Desulforamulus reducens (strain ATCC BAA-1160 / DSM 100696 / MI-1) (Desulfotomaculum reducens).